Reading from the N-terminus, the 29-residue chain is Glucagon (29 aa).

A Phosphoserine modification is found at serine 2.

Belongs to the glucagon family.

It localises to the secreted. In terms of biological role, glucagon plays a key role in glucose metabolism and homeostasis. Regulates blood glucose by increasing gluconeogenesis and decreasing glycolysis. The sequence is that of Glucagon (GCG) from Chinchilla chinchilla (Short-tailed chinchilla).